The primary structure comprises 24 residues: VGTRVVRIEDQQLITQGGTYVEDL.

Heterotetramer composed of an alpha, a beta and two gamma chains. The cofactor is Mo-molybdopterin cytosine dinucleotide.

Functionally, active with aldehydes and formate esters as substrates. The polypeptide is DYE-linked aldehyde dehydrogenase, alpha chain (Amycolatopsis methanolica).